A 116-amino-acid chain; its full sequence is Flagellar transcriptional regulator FlhD (116 aa).

This sequence belongs to the FlhD family. Homodimer; disulfide-linked. Forms a heterohexamer composed of two FlhC and four FlhD subunits. Each FlhC binds a FlhD dimer, forming a heterotrimer, and a hexamer assembles by dimerization of two heterotrimers.

Its subcellular location is the cytoplasm. Functionally, functions in complex with FlhC as a master transcriptional regulator that regulates transcription of several flagellar and non-flagellar operons by binding to their promoter region. Activates expression of class 2 flagellar genes, including fliA, which is a flagellum-specific sigma factor that turns on the class 3 genes. Also regulates genes whose products function in a variety of physiological pathways. The protein is Flagellar transcriptional regulator FlhD of Enterobacter sp. (strain 22).